A 137-amino-acid chain; its full sequence is Methylglyoxal synthase (137 aa).

The MGS-like domain occupies 1 to 137 (MKIALIAHDR…NIVHGRDRDA (137 aa)). Residues histidine 8, lysine 12, 34-37 (TGTT), and 54-55 (SG) each bind substrate. Residue aspartate 60 is the Proton donor/acceptor of the active site. Histidine 87 is a binding site for substrate.

This sequence belongs to the methylglyoxal synthase family.

It catalyses the reaction dihydroxyacetone phosphate = methylglyoxal + phosphate. In terms of biological role, catalyzes the formation of methylglyoxal from dihydroxyacetone phosphate. In Bacillus licheniformis (strain ATCC 14580 / DSM 13 / JCM 2505 / CCUG 7422 / NBRC 12200 / NCIMB 9375 / NCTC 10341 / NRRL NRS-1264 / Gibson 46), this protein is Methylglyoxal synthase.